A 161-amino-acid polypeptide reads, in one-letter code: uncharacterized protein (161 aa).

This is an uncharacterized protein from Rickettsia conorii (strain ATCC VR-613 / Malish 7).